The chain runs to 352 residues: C-C chemokine receptor type 5 (352 aa).

The Extracellular portion of the chain corresponds to 1–30 (MDYQVSSPTYDIDYYTSEPCQKINVKQIAA). Tyr3 is modified (sulfotyrosine). Residues Ser6 and Ser7 are each glycosylated (O-linked (GalNAc...) serine). A sulfotyrosine mark is found at Tyr10, Tyr14, and Tyr15. 2 disulfide bridges follow: Cys20-Cys269 and Cys101-Cys178. A helical membrane pass occupies residues 31-58 (HLLPPLYSLVFIFGFVGNILVVLILINC). The Cytoplasmic portion of the chain corresponds to 59–68 (KRLKSMTDIY). Residues 69 to 89 (LLNLAISDLLFLLTVPFWAHY) form a helical membrane-spanning segment. The Extracellular portion of the chain corresponds to 90–102 (AAAQWDFGNIMCQ). Residues 103-124 (LLTGLYFIGFFSGIFFIILLTI) form a helical membrane-spanning segment. Over 125 to 141 (DRYLAIVHAVFALKART) the chain is Cytoplasmic. Residues 142 to 166 (VTFGVVTSVITWVVAVFASLPGIIF) form a helical membrane-spanning segment. The Extracellular portion of the chain corresponds to 167-198 (TRSQREGLHYTCSSHFPYSQYQFWKNFRTLKI). A helical transmembrane segment spans residues 199 to 218 (VILGLVLPLLVMVICYSGIL). The Cytoplasmic segment spans residues 219–235 (KTLLRCRNEKKRHRAVR). Residues 236 to 260 (LIFTIMIVYFLFWAPYNIVLLLNTF) traverse the membrane as a helical segment. Topologically, residues 261–277 (QEFFGLNNCSSSNRLDQ) are extracellular. The chain crosses the membrane as a helical span at residues 278-301 (AMQVTETLGMTHCCINPIIYAFVG). The Cytoplasmic portion of the chain corresponds to 302-352 (EKFRNYLLVFFQKHIAKRFCKCCSIFQQEAPERASSVYTRSTGEQEISVGL). S-palmitoyl cysteine attachment occurs at residues Cys321, Cys323, and Cys324. Phosphoserine; by BARK1 occurs at positions 336, 337, 342, and 349.

Belongs to the G-protein coupled receptor 1 family. As to quaternary structure, interacts with PRAF2. Efficient ligand binding to CCL3/MIP-1alpha and CCL4/MIP-1beta requires sulfation, O-glycosylation and sialic acid modifications. Glycosylation on Ser-6 is required for efficient binding of CCL4. Interacts with GRK2. Interacts with ARRB1 and ARRB2. Interacts with CNIH4. Interacts with S100A4; this interaction stimulates T-lymphocyte chemotaxis. Sulfated on at least 2 of the N-terminal tyrosines. Sulfation is required for efficient binding of the chemokines, CCL3 and CCL4. Post-translationally, palmitoylation in the C-terminal is important for cell surface expression. In terms of processing, phosphorylation on serine residues in the C-terminal is stimulated by binding CC chemokines especially by APO-RANTES. O-glycosylated, but not N-glycosylated. Ser-6 appears to be the major site even if Ser-7 may be also O-glycosylated. Also sialylated glycans present which contribute to chemokine binding. Thr-16 and Ser-17 may also be glycosylated and, if so, with small moieties such as a T-antigen.

It is found in the cell membrane. Receptor for a number of inflammatory CC-chemokines including CCL3/MIP-1-alpha, CCL4/MIP-1-beta and RANTES and subsequently transduces a signal by increasing the intracellular calcium ion level. May play a role in the control of granulocytic lineage proliferation or differentiation. Participates in T-lymphocyte migration to the infection site by acting as a chemotactic receptor. This chain is C-C chemokine receptor type 5 (CCR5), found in Mandrillus sphinx (Mandrill).